The chain runs to 250 residues: Heme oxygenase 2 (250 aa).

Histidine 16 contributes to the heme b binding site. Residues 228-250 (QDRPGSTEARSTAGHPITLMVGE) form a disordered region.

Belongs to the heme oxygenase family. Homodimer.

It catalyses the reaction heme b + 3 reduced [NADPH--hemoprotein reductase] + 3 O2 = biliverdin IXalpha + CO + Fe(2+) + 3 oxidized [NADPH--hemoprotein reductase] + 3 H2O + H(+). Catalyzes the opening of the heme ring with the release of iron. Key enzyme in the synthesis of the chromophoric part of the photosynthetic antennae. This Synechocystis sp. (strain ATCC 27184 / PCC 6803 / Kazusa) protein is Heme oxygenase 2 (pbsA2).